Consider the following 158-residue polypeptide: Large ribosomal subunit protein uL13 (158 aa).

Belongs to the universal ribosomal protein uL13 family. As to quaternary structure, part of the 50S ribosomal subunit.

Functionally, this protein is one of the early assembly proteins of the 50S ribosomal subunit, although it is not seen to bind rRNA by itself. It is important during the early stages of 50S assembly. The chain is Large ribosomal subunit protein uL13 from Rickettsia canadensis (strain McKiel).